The chain runs to 38 residues: Putative ORF10 protein (38 aa).

In terms of assembly, binds host ZYG11B. This would not play any role in SARS-CoV-2 infection.

The protein is Putative ORF10 protein of Severe acute respiratory syndrome coronavirus 2 (2019-nCoV).